We begin with the raw amino-acid sequence, 459 residues long: Ribulose bisphosphate carboxylase (459 aa).

Asn111 is a binding site for substrate. Lys166 functions as the Proton acceptor in the catalytic mechanism. Residue Lys168 coordinates substrate. Residues Lys191, Asp193, and Glu194 each contribute to the Mg(2+) site. At Lys191 the chain carries N6-carboxylysine. His287 serves as the catalytic Proton acceptor. Substrate is bound by residues Arg288, His321, and Ser368.

The protein belongs to the RuBisCO large chain family. Type II subfamily. Homodimer. Mg(2+) serves as cofactor.

It carries out the reaction 2 (2R)-3-phosphoglycerate + 2 H(+) = D-ribulose 1,5-bisphosphate + CO2 + H2O. It catalyses the reaction D-ribulose 1,5-bisphosphate + O2 = 2-phosphoglycolate + (2R)-3-phosphoglycerate + 2 H(+). RuBisCO catalyzes two reactions: the carboxylation of D-ribulose 1,5-bisphosphate, the primary event in carbon dioxide fixation, as well as the oxidative fragmentation of the pentose substrate. Both reactions occur simultaneously and in competition at the same active site. In Dechloromonas aromatica (strain RCB), this protein is Ribulose bisphosphate carboxylase.